A 254-amino-acid chain; its full sequence is Acetyl-coenzyme A carboxylase carboxyl transferase subunit beta (254 aa).

The CoA carboxyltransferase N-terminal domain maps to 1–254 (MWLRCPHCHQ…LLKTGSVANE (254 aa)). Zn(2+) contacts are provided by Cys-5, Cys-8, Cys-23, and Cys-26. The C4-type zinc-finger motif lies at 5–26 (CPHCHQLLFAKQLTQYAVCPNC).

This sequence belongs to the AccD/PCCB family. As to quaternary structure, acetyl-CoA carboxylase is a heterohexamer composed of biotin carboxyl carrier protein (AccB), biotin carboxylase (AccC) and two subunits each of ACCase subunit alpha (AccA) and ACCase subunit beta (AccD). It depends on Zn(2+) as a cofactor.

The protein resides in the cytoplasm. The enzyme catalyses N(6)-carboxybiotinyl-L-lysyl-[protein] + acetyl-CoA = N(6)-biotinyl-L-lysyl-[protein] + malonyl-CoA. It participates in lipid metabolism; malonyl-CoA biosynthesis; malonyl-CoA from acetyl-CoA: step 1/1. Component of the acetyl coenzyme A carboxylase (ACC) complex. Biotin carboxylase (BC) catalyzes the carboxylation of biotin on its carrier protein (BCCP) and then the CO(2) group is transferred by the transcarboxylase to acetyl-CoA to form malonyl-CoA. The protein is Acetyl-coenzyme A carboxylase carboxyl transferase subunit beta of Limosilactobacillus reuteri (strain DSM 20016) (Lactobacillus reuteri).